Consider the following 255-residue polypeptide: MVLIRVIANLLILQVSYAQKSSELVIGGDECDINEHPFLAFMYYSPRYFCGMTLINQEWVLTAAHCNRRFMRIHLGKHAGSVANYDEVVRYPKEKFICPNKKKNVITDKDIMLIRLDRPVKNSEHIAPLSLPSNPPSVGSVCRIMGWGAITTSEDTYPDVPHCANINLFNNTVCREAYNGLPAKTLCAGVLQGGIDTCGGDSGGPLICNGQFQGILSWGSDPCAEPRKPAFYTKVFDYLPWIQSIIAGNKTATCP.

The first 18 residues, 1–18 (MVLIRVIANLLILQVSYA), serve as a signal peptide directing secretion. Residues 19 to 24 (QKSSEL) constitute a propeptide that is removed on maturation. The 223-residue stretch at 25-247 (VIGGDECDIN…YLPWIQSIIA (223 aa)) folds into the Peptidase S1 domain. Disulfide bonds link Cys-31-Cys-163, Cys-50-Cys-66, Cys-98-Cys-254, Cys-142-Cys-208, Cys-174-Cys-187, and Cys-198-Cys-223. Residues His-65 and Asp-110 each act as charge relay system in the active site. N-linked (GlcNAc...) asparagine glycosylation is present at Asn-170. Ser-202 functions as the Charge relay system in the catalytic mechanism. Residue Asn-249 is glycosylated (N-linked (GlcNAc...) asparagine).

Belongs to the peptidase S1 family. Snake venom subfamily. Monomer. In terms of tissue distribution, expressed by the venom gland.

The protein resides in the secreted. It carries out the reaction Selective cleavage of Arg-|-Xaa bond in fibrinogen, to form fibrin, and release fibrinopeptide A. The specificity of further degradation of fibrinogen varies with species origin of the enzyme.. Functionally, thrombin-like snake venom serine protease. Cleaves Arg-Gly bonds in fibrinogen alpha chains (FGA). The sequence is that of Thrombin-like enzyme batroxobin from Bothrops atrox (Barba amarilla).